Consider the following 95-residue polypeptide: Aspartyl/glutamyl-tRNA(Asn/Gln) amidotransferase subunit C (95 aa).

It belongs to the GatC family. As to quaternary structure, heterotrimer of A, B and C subunits.

It carries out the reaction L-glutamyl-tRNA(Gln) + L-glutamine + ATP + H2O = L-glutaminyl-tRNA(Gln) + L-glutamate + ADP + phosphate + H(+). The enzyme catalyses L-aspartyl-tRNA(Asn) + L-glutamine + ATP + H2O = L-asparaginyl-tRNA(Asn) + L-glutamate + ADP + phosphate + 2 H(+). Allows the formation of correctly charged Asn-tRNA(Asn) or Gln-tRNA(Gln) through the transamidation of misacylated Asp-tRNA(Asn) or Glu-tRNA(Gln) in organisms which lack either or both of asparaginyl-tRNA or glutaminyl-tRNA synthetases. The reaction takes place in the presence of glutamine and ATP through an activated phospho-Asp-tRNA(Asn) or phospho-Glu-tRNA(Gln). The sequence is that of Aspartyl/glutamyl-tRNA(Asn/Gln) amidotransferase subunit C from Rhodospirillum rubrum (strain ATCC 11170 / ATH 1.1.1 / DSM 467 / LMG 4362 / NCIMB 8255 / S1).